The chain runs to 258 residues: Pimeloyl-[acyl-carrier protein] methyl ester esterase (258 aa).

In terms of domain architecture, AB hydrolase-1 spans 17–241; that stretch reads VYLIHGWGAN…KAAHAPFLSH (225 aa). Residues tryptophan 23, 83–84, and 145–149 each bind substrate; these read SL and FLQLQ. The active-site Nucleophile is serine 83. Catalysis depends on residues aspartate 207 and histidine 235. Substrate is bound at residue histidine 235.

Belongs to the AB hydrolase superfamily. Carboxylesterase BioH family. As to quaternary structure, monomer.

Its subcellular location is the cytoplasm. It catalyses the reaction 6-carboxyhexanoyl-[ACP] methyl ester + H2O = 6-carboxyhexanoyl-[ACP] + methanol + H(+). It participates in cofactor biosynthesis; biotin biosynthesis. In terms of biological role, the physiological role of BioH is to remove the methyl group introduced by BioC when the pimeloyl moiety is complete. It allows to synthesize pimeloyl-ACP via the fatty acid synthetic pathway through the hydrolysis of the ester bonds of pimeloyl-ACP esters. The sequence is that of Pimeloyl-[acyl-carrier protein] methyl ester esterase from Neisseria meningitidis serogroup B (strain ATCC BAA-335 / MC58).